We begin with the raw amino-acid sequence, 262 residues long: Sulfur carrier protein FdhD (262 aa).

The Cysteine persulfide intermediate role is filled by C107.

It belongs to the FdhD family.

The protein resides in the cytoplasm. Required for formate dehydrogenase (FDH) activity. Acts as a sulfur carrier protein that transfers sulfur from IscS to the molybdenum cofactor prior to its insertion into FDH. This chain is Sulfur carrier protein FdhD, found in Bacillus subtilis (strain 168).